A 596-amino-acid polypeptide reads, in one-letter code: Transketolase-like protein 1 (596 aa).

Residue His46 coordinates substrate. Residues Ser49 and 94–96 (GWL) each bind thiamine diphosphate. A Mg(2+)-binding site is contributed by Asp126. Thiamine diphosphate is bound by residues Gly127 and Asn156. Positions 156 and 158 each coordinate Mg(2+). Thiamine diphosphate-binding residues include Lys218 and His232. Substrate contacts are provided by His232, Arg292, and Ser319. Positions 340 and 366 each coordinate thiamine diphosphate. Residue Glu340 is the Proton donor of the active site. Substrate-binding residues include His390 and Asp398. Position 402 (Gln402) interacts with thiamine diphosphate. Position 448 (Arg448) interacts with substrate.

Belongs to the transketolase family. Homodimer. Mg(2+) is required as a cofactor. Requires Ca(2+) as cofactor. The cofactor is Mn(2+). Co(2+) serves as cofactor. It depends on thiamine diphosphate as a cofactor.

The protein resides in the cytoplasm. The catalysed reaction is D-sedoheptulose 7-phosphate + D-glyceraldehyde 3-phosphate = aldehydo-D-ribose 5-phosphate + D-xylulose 5-phosphate. In terms of biological role, catalyzes the transfer of a two-carbon ketol group from a ketose donor to an aldose acceptor, via a covalent intermediate with the cofactor thiamine pyrophosphate. This is Transketolase-like protein 1 (TKTL1) from Macaca fascicularis (Crab-eating macaque).